The sequence spans 3841 residues: Transformation/transcription domain-associated protein (3841 aa).

Disordered regions lie at residues 491 to 516 (TPTV…PPAT) and 2002 to 2027 (QQPE…MKRG). Positions 498 to 515 (ALPPPAPPTPVTPAPPPA) are enriched in pro residues. The short motif at 2025–2040 (KRGMSVDSAQDVKRFR) is the Bipartite nuclear localization signal element. Residues 2671-3239 (VLKYLGKTHN…YFPIRTLYLT (569 aa)) form the FAT domain. Residues 3249-3271 (KSDSGQQQPSSAAAQTHSASDPG) are disordered. The span at 3251–3268 (DSGQQQPSSAAAQTHSAS) shows a compositional bias: low complexity. Residues 3482-3805 (MPRVEIVQKH…AVTAIMTRLH (324 aa)) enclose the PI3K/PI4K catalytic domain. Residues 3488–3494 (VQKHNTA) form a G-loop region. The catalytic loop stretch occupies residues 3669–3677 (HLNRLNPEM). The activation loop stretch occupies residues 3689-3714 (VSYFRFDINDATGDLDANRPVPFRLT). The region spanning 3809-3841 (QFEGGESKVNTLVAAANSLDNLCRMDPAWHPWL) is the FATC domain.

Belongs to the PI3/PI4-kinase family. TRA1 subfamily.

The protein resides in the nucleus. Adapter protein, which is found in various multiprotein chromatin complexes with histone acetyltransferase activity (HAT), which gives a specific tag for epigenetic transcription activation. May be required for the mitotic checkpoint and normal cell cycle progression. May play a role in the formation and maintenance of the auditory system. The sequence is that of Transformation/transcription domain-associated protein from Danio rerio (Zebrafish).